The sequence spans 339 residues: Replication factor C subunit 5 (339 aa).

Position 59–66 (59–66) interacts with ATP; sequence GPPGTGKT.

The protein belongs to the activator 1 small subunits family. In terms of assembly, subunit of the RFC complex, an heteropentameric complex consisting of a large subunit RFC1 and four small subunits RFC2, RFC3, RFC4 and RFC5; the RFC complex interacts with PCNA. Forms an heterotetrameric complex with RFC2, RFC3 and RFC4; this complex has ATPase activity but is not stimulated by PCNA. The heterotetramer of subunits RFC2, RFC3, RFC4 and RFC5 interacts with RAD17.

It is found in the nucleus. In terms of biological role, subunit of the replication factor C (RFC) complex which acts during elongation of primed DNA templates by DNA polymerases delta and epsilon, and is necessary for ATP-dependent loading of proliferating cell nuclear antigen (PCNA) onto primed DNA. The polypeptide is Replication factor C subunit 5 (Rfc5) (Mus musculus (Mouse)).